The primary structure comprises 1004 residues: 2-oxoglutarate dehydrogenase E1 component (1004 aa).

It belongs to the alpha-ketoglutarate dehydrogenase family. In terms of assembly, homodimer. Part of the 2-oxoglutarate dehydrogenase (OGDH) complex composed of E1 (2-oxoglutarate dehydrogenase), E2 (dihydrolipoamide succinyltransferase) and E3 (dihydrolipoamide dehydrogenase); the complex contains multiple copies of the three enzymatic components (E1, E2 and E3). Thiamine diphosphate is required as a cofactor.

The enzyme catalyses N(6)-[(R)-lipoyl]-L-lysyl-[protein] + 2-oxoglutarate + H(+) = N(6)-[(R)-S(8)-succinyldihydrolipoyl]-L-lysyl-[protein] + CO2. Its function is as follows. E1 component of the 2-oxoglutarate dehydrogenase (OGDH) complex which catalyzes the decarboxylation of 2-oxoglutarate, the first step in the conversion of 2-oxoglutarate to succinyl-CoA and CO(2). The protein is 2-oxoglutarate dehydrogenase E1 component of Brucella canis (strain ATCC 23365 / NCTC 10854 / RM-666).